Reading from the N-terminus, the 120-residue chain is Phosphoribosyl-ATP pyrophosphatase (120 aa).

The disordered stretch occupies residues 97–120 (REGTSGLVEKASRPAKKDSGTADS). Positions 106–120 (KASRPAKKDSGTADS) are enriched in basic and acidic residues.

It belongs to the PRA-PH family.

The protein resides in the cytoplasm. The catalysed reaction is 1-(5-phospho-beta-D-ribosyl)-ATP + H2O = 1-(5-phospho-beta-D-ribosyl)-5'-AMP + diphosphate + H(+). The protein operates within amino-acid biosynthesis; L-histidine biosynthesis; L-histidine from 5-phospho-alpha-D-ribose 1-diphosphate: step 2/9. This chain is Phosphoribosyl-ATP pyrophosphatase, found in Rhodopirellula baltica (strain DSM 10527 / NCIMB 13988 / SH1).